The following is a 293-amino-acid chain: Pyridoxal 5'-phosphate synthase subunit PdxS (293 aa).

Residue Asp25 participates in D-ribose 5-phosphate binding. The active-site Schiff-base intermediate with D-ribose 5-phosphate is Lys82. Position 154 (Gly154) interacts with D-ribose 5-phosphate. Arg166 contacts D-glyceraldehyde 3-phosphate. D-ribose 5-phosphate is bound by residues Gly215 and 236-237; that span reads GS.

Belongs to the PdxS/SNZ family. As to quaternary structure, in the presence of PdxT, forms a dodecamer of heterodimers.

It catalyses the reaction aldehydo-D-ribose 5-phosphate + D-glyceraldehyde 3-phosphate + L-glutamine = pyridoxal 5'-phosphate + L-glutamate + phosphate + 3 H2O + H(+). Its pathway is cofactor biosynthesis; pyridoxal 5'-phosphate biosynthesis. Its function is as follows. Catalyzes the formation of pyridoxal 5'-phosphate from ribose 5-phosphate (RBP), glyceraldehyde 3-phosphate (G3P) and ammonia. The ammonia is provided by the PdxT subunit. Can also use ribulose 5-phosphate and dihydroxyacetone phosphate as substrates, resulting from enzyme-catalyzed isomerization of RBP and G3P, respectively. The polypeptide is Pyridoxal 5'-phosphate synthase subunit PdxS (Thermotoga petrophila (strain ATCC BAA-488 / DSM 13995 / JCM 10881 / RKU-1)).